Consider the following 89-residue polypeptide: Small ribosomal subunit protein uS15 (89 aa).

This sequence belongs to the universal ribosomal protein uS15 family. As to quaternary structure, part of the 30S ribosomal subunit. Forms a bridge to the 50S subunit in the 70S ribosome, contacting the 23S rRNA.

Its function is as follows. One of the primary rRNA binding proteins, it binds directly to 16S rRNA where it helps nucleate assembly of the platform of the 30S subunit by binding and bridging several RNA helices of the 16S rRNA. Forms an intersubunit bridge (bridge B4) with the 23S rRNA of the 50S subunit in the ribosome. This Baumannia cicadellinicola subsp. Homalodisca coagulata protein is Small ribosomal subunit protein uS15.